Reading from the N-terminus, the 246-residue chain is Small ribosomal subunit protein uS2 (246 aa).

It belongs to the universal ribosomal protein uS2 family.

This Azotobacter vinelandii (strain DJ / ATCC BAA-1303) protein is Small ribosomal subunit protein uS2.